A 299-amino-acid chain; its full sequence is Protoheme IX farnesyltransferase 1 (299 aa).

9 helical membrane-spanning segments follow: residues valine 24–proline 44, alanine 46–valine 66, leucine 97–alanine 117, leucine 118–leucine 138, isoleucine 146–glycine 166, alanine 170–leucine 190, leucine 217–glycine 237, alanine 239–valine 259, and isoleucine 278–leucine 298.

The protein belongs to the UbiA prenyltransferase family. Protoheme IX farnesyltransferase subfamily.

Its subcellular location is the cell inner membrane. It catalyses the reaction heme b + (2E,6E)-farnesyl diphosphate + H2O = Fe(II)-heme o + diphosphate. Its pathway is porphyrin-containing compound metabolism; heme O biosynthesis; heme O from protoheme: step 1/1. Functionally, converts heme B (protoheme IX) to heme O by substitution of the vinyl group on carbon 2 of heme B porphyrin ring with a hydroxyethyl farnesyl side group. The polypeptide is Protoheme IX farnesyltransferase 1 (Chromobacterium violaceum (strain ATCC 12472 / DSM 30191 / JCM 1249 / CCUG 213 / NBRC 12614 / NCIMB 9131 / NCTC 9757 / MK)).